Consider the following 208-residue polypeptide: NAD(P)H-quinone oxidoreductase subunit I (208 aa).

4Fe-4S ferredoxin-type domains lie at 55–84 and 95–124; these read GRIH…VDWV and RNYS…MTEE. 8 residues coordinate [4Fe-4S] cluster: cysteine 64, cysteine 67, cysteine 70, cysteine 74, cysteine 104, cysteine 107, cysteine 110, and cysteine 114.

Belongs to the complex I 23 kDa subunit family. In terms of assembly, NDH-1 is composed of at least 11 different subunits. [4Fe-4S] cluster is required as a cofactor.

The protein localises to the cellular thylakoid membrane. The enzyme catalyses a plastoquinone + NADH + (n+1) H(+)(in) = a plastoquinol + NAD(+) + n H(+)(out). The catalysed reaction is a plastoquinone + NADPH + (n+1) H(+)(in) = a plastoquinol + NADP(+) + n H(+)(out). Its function is as follows. NDH-1 shuttles electrons from an unknown electron donor, via FMN and iron-sulfur (Fe-S) centers, to quinones in the respiratory and/or the photosynthetic chain. The immediate electron acceptor for the enzyme in this species is believed to be plastoquinone. Couples the redox reaction to proton translocation, and thus conserves the redox energy in a proton gradient. In Prochlorococcus marinus (strain MIT 9301), this protein is NAD(P)H-quinone oxidoreductase subunit I.